A 338-amino-acid chain; its full sequence is Ketol-acid reductoisomerase (NADP(+)) (338 aa).

Residues M1 to T181 form the KARI N-terminal Rossmann domain. Residues Y24 to Q27, R47, S50, S52, and D82 to Q85 each bind NADP(+). The active site involves H107. G133 provides a ligand contact to NADP(+). The KARI C-terminal knotted domain occupies S182–I327. Mg(2+) is bound by residues D190, E194, E226, and E230. S251 serves as a coordination point for substrate.

It belongs to the ketol-acid reductoisomerase family. The cofactor is Mg(2+).

It catalyses the reaction (2R)-2,3-dihydroxy-3-methylbutanoate + NADP(+) = (2S)-2-acetolactate + NADPH + H(+). The enzyme catalyses (2R,3R)-2,3-dihydroxy-3-methylpentanoate + NADP(+) = (S)-2-ethyl-2-hydroxy-3-oxobutanoate + NADPH + H(+). Its pathway is amino-acid biosynthesis; L-isoleucine biosynthesis; L-isoleucine from 2-oxobutanoate: step 2/4. It functions in the pathway amino-acid biosynthesis; L-valine biosynthesis; L-valine from pyruvate: step 2/4. Functionally, involved in the biosynthesis of branched-chain amino acids (BCAA). Catalyzes an alkyl-migration followed by a ketol-acid reduction of (S)-2-acetolactate (S2AL) to yield (R)-2,3-dihydroxy-isovalerate. In the isomerase reaction, S2AL is rearranged via a Mg-dependent methyl migration to produce 3-hydroxy-3-methyl-2-ketobutyrate (HMKB). In the reductase reaction, this 2-ketoacid undergoes a metal-dependent reduction by NADPH to yield (R)-2,3-dihydroxy-isovalerate. The sequence is that of Ketol-acid reductoisomerase (NADP(+)) from Acinetobacter baumannii (strain AB0057).